Here is a 178-residue protein sequence, read N- to C-terminus: ATP synthase subunit delta (178 aa).

Belongs to the ATPase delta chain family. In terms of assembly, F-type ATPases have 2 components, F(1) - the catalytic core - and F(0) - the membrane proton channel. F(1) has five subunits: alpha(3), beta(3), gamma(1), delta(1), epsilon(1). F(0) has three main subunits: a(1), b(2) and c(10-14). The alpha and beta chains form an alternating ring which encloses part of the gamma chain. F(1) is attached to F(0) by a central stalk formed by the gamma and epsilon chains, while a peripheral stalk is formed by the delta and b chains.

The protein localises to the cell membrane. Its function is as follows. F(1)F(0) ATP synthase produces ATP from ADP in the presence of a proton or sodium gradient. F-type ATPases consist of two structural domains, F(1) containing the extramembraneous catalytic core and F(0) containing the membrane proton channel, linked together by a central stalk and a peripheral stalk. During catalysis, ATP synthesis in the catalytic domain of F(1) is coupled via a rotary mechanism of the central stalk subunits to proton translocation. In terms of biological role, this protein is part of the stalk that links CF(0) to CF(1). It either transmits conformational changes from CF(0) to CF(1) or is implicated in proton conduction. This Geobacillus sp. (strain WCH70) protein is ATP synthase subunit delta.